We begin with the raw amino-acid sequence, 484 residues long: Threonine synthase-like 2 (484 aa).

Residue Lys113 is modified to N6-(pyridoxal phosphate)lysine.

It belongs to the threonine synthase family. Pyridoxal 5'-phosphate serves as cofactor.

It is found in the secreted. Acts as a catabolic phospho-lyase on both gamma- and beta-phosphorylated substrates. Degrades O-phospho-threonine (PThr) to alpha-ketobutyrate, ammonia and phosphate. Its function is as follows. Potent inducer of osteoblastic production of IL6. May act to exacerbate inflammation and/or bone turnover under inflammatory conditions. This is Threonine synthase-like 2 (THNSL2) from Homo sapiens (Human).